Consider the following 126-residue polypeptide: Large ribosomal subunit protein bL17 (126 aa).

This sequence belongs to the bacterial ribosomal protein bL17 family. Part of the 50S ribosomal subunit. Contacts protein L32.

The polypeptide is Large ribosomal subunit protein bL17 (Coxiella burnetii (strain CbuK_Q154) (Coxiella burnetii (strain Q154))).